We begin with the raw amino-acid sequence, 133 residues long: Small ribosomal subunit protein uS11 (133 aa).

Belongs to the universal ribosomal protein uS11 family. In terms of assembly, part of the 30S ribosomal subunit.

In terms of biological role, located on the platform of the 30S subunit. This is Small ribosomal subunit protein uS11 from Pyrobaculum aerophilum (strain ATCC 51768 / DSM 7523 / JCM 9630 / CIP 104966 / NBRC 100827 / IM2).